Reading from the N-terminus, the 299-residue chain is Cuticle collagen 34 (299 aa).

The tract at residues 105-282 (PGPAGTPGKP…GSPGERGICP (178 aa)) is disordered. The span at 129–162 (PGRPPQQPCEPITPPPCKPCPQGPPGPPGPPGPP) shows a compositional bias: pro residues. Residues 164 to 181 (DSGEPGSPGLPGQDAAPG) are compositionally biased toward low complexity. Composition is skewed to pro residues over residues 182 to 195 (EPGP…PGAP) and 215 to 233 (PGEP…PGSP). A triple-helical region region spans residues 216-278 (GEPGPPGEAG…AGPPGSPGER (63 aa)). Positions 251–263 (NGPDGQPGADGNP) are enriched in low complexity. Over residues 265–274 (APGPAGPPGS) the composition is skewed to pro residues.

It belongs to the cuticular collagen family. Collagen polypeptide chains are complexed within the cuticle by disulfide bonds and other types of covalent cross-links.

Nematode cuticles are composed largely of collagen-like proteins. The cuticle functions both as an exoskeleton and as a barrier to protect the worm from its environment. The polypeptide is Cuticle collagen 34 (col-34) (Caenorhabditis elegans).